The primary structure comprises 94 residues: MVLNYTMHMMYSKNWKAKKGLIRVTLDLDGNRIKDIHISGDFFMFPEDSINRLEDMLRGSSIEKINDIIRDFYNQGVITPGVEPEDFIQALRVI.

In terms of assembly, heterodimer composed of LplA and LplB.

The enzyme catalyses L-lysyl-[lipoyl-carrier protein] + (R)-lipoate + ATP = N(6)-[(R)-lipoyl]-L-lysyl-[lipoyl-carrier protein] + AMP + diphosphate + H(+). It participates in protein modification; protein lipoylation via exogenous pathway; protein N(6)-(lipoyl)lysine from lipoate: step 1/2. The protein operates within protein modification; protein lipoylation via exogenous pathway; protein N(6)-(lipoyl)lysine from lipoate: step 2/2. Its function is as follows. Part of a lipoate-protein ligase complex that catalyzes both the ATP-dependent activation of exogenously supplied lipoate to lipoyl-AMP and the transfer of the activated lipoyl onto the lipoyl domains of lipoate-dependent enzymes. Can also use octanoate as substrate. This is Lipoate-protein ligase A subunit 2 (lplB) from Thermoplasma acidophilum (strain ATCC 25905 / DSM 1728 / JCM 9062 / NBRC 15155 / AMRC-C165).